The following is an 89-amino-acid chain: Small ribosomal subunit protein uS15 (89 aa).

This sequence belongs to the universal ribosomal protein uS15 family. Part of the 30S ribosomal subunit. Forms a bridge to the 50S subunit in the 70S ribosome, contacting the 23S rRNA.

One of the primary rRNA binding proteins, it binds directly to 16S rRNA where it helps nucleate assembly of the platform of the 30S subunit by binding and bridging several RNA helices of the 16S rRNA. Its function is as follows. Forms an intersubunit bridge (bridge B4) with the 23S rRNA of the 50S subunit in the ribosome. The polypeptide is Small ribosomal subunit protein uS15 (Pseudomonas putida (strain GB-1)).